The primary structure comprises 290 residues: 4-hydroxybenzoate octaprenyltransferase (290 aa).

8 consecutive transmembrane segments (helical) span residues 23–43, 46–66, 99–119, 141–161, 163–183, 213–233, 234–254, and 268–288; these read IGAL…TPGV, LWIM…GCVV, LFVV…TMTI, LPQV…FAAV, ESVP…AVAY, LIIG…GELN, GLGW…VYQQ, and AFMN…MSYW.

It belongs to the UbiA prenyltransferase family. The cofactor is Mg(2+).

It is found in the cell inner membrane. It catalyses the reaction all-trans-octaprenyl diphosphate + 4-hydroxybenzoate = 4-hydroxy-3-(all-trans-octaprenyl)benzoate + diphosphate. It participates in cofactor biosynthesis; ubiquinone biosynthesis. Functionally, catalyzes the prenylation of para-hydroxybenzoate (PHB) with an all-trans polyprenyl group. Mediates the second step in the final reaction sequence of ubiquinone-8 (UQ-8) biosynthesis, which is the condensation of the polyisoprenoid side chain with PHB, generating the first membrane-bound Q intermediate 3-octaprenyl-4-hydroxybenzoate. The protein is 4-hydroxybenzoate octaprenyltransferase of Shigella flexneri.